The chain runs to 256 residues: MSYLSRILEEKEREVGELASEHPARRYAELQGSLAPTRDFTGALRRTGRGLRLIAEIKKASPSRGLIVPDFDPVNIARRYGELGAAAYSVLTDRTFFQGSIDYLQMVSRSFQLPVLRKDFIIDESQIFQSRLTGADAILLIVAALDSCQLGDYLQLAASVGLHVLVEVHDRKELDRAIEKGAPIIGVNNRDLKDFSLKLETSLSLRPFIPSDVLAVSESGLKSSADIALIEQASFDAVLIGEGLYTSPELGRITWS.

It belongs to the TrpC family.

It catalyses the reaction 1-(2-carboxyphenylamino)-1-deoxy-D-ribulose 5-phosphate + H(+) = (1S,2R)-1-C-(indol-3-yl)glycerol 3-phosphate + CO2 + H2O. The protein operates within amino-acid biosynthesis; L-tryptophan biosynthesis; L-tryptophan from chorismate: step 4/5. This is Indole-3-glycerol phosphate synthase from Pelodictyon phaeoclathratiforme (strain DSM 5477 / BU-1).